A 341-amino-acid chain; its full sequence is Trace amine-associated receptor 13c (341 aa).

Over Met-1 to Val-34 the chain is Extracellular. Asn-19 is a glycosylation site (N-linked (GlcNAc...) asparagine). 2 disulfide bridges follow: Cys-22–Cys-186 and Cys-105–Cys-186. Residues Val-35–Ile-55 form a helical membrane-spanning segment. Residues Ser-56–Asn-68 lie on the Cytoplasmic side of the membrane. A helical transmembrane segment spans residues Ile-69–Ser-89. At Met-90–Cys-105 the chain is on the extracellular side. The helical transmembrane segment at Leu-106–Ile-126 threads the bilayer. Residues Ala-127–Pro-147 lie on the Cytoplasmic side of the membrane. The chain crosses the membrane as a helical span at residues Val-148–Val-168. Residues Tyr-169–Asn-195 are Extracellular-facing. The chain crosses the membrane as a helical span at residues Ala-196–Ala-219. Topologically, residues Arg-220 to Thr-257 are cytoplasmic. The chain crosses the membrane as a helical span at residues Leu-258–Val-278. At Asp-279 to Asp-292 the chain is on the extracellular side. Asn-283 carries an N-linked (GlcNAc...) asparagine glycan. A helical membrane pass occupies residues Ala-293–Tyr-313. The Cytoplasmic segment spans residues Pro-314–Val-341.

The protein belongs to the G-protein coupled receptor 1 family. As to expression, expressed in olfactory epithelium (at protein level). Detected in a sparse population of olfactory sensory neurons.

It localises to the cell membrane. Olfactory receptor for medium length odd-chained diamines including cadaverine which is generated by bacterial decarboxylation of the basic amino acid lysine and contributes to the odor of decomposing tissue. Mediates pronounced innate aversion behavior to cadaverine. In Danio rerio (Zebrafish), this protein is Trace amine-associated receptor 13c.